Here is a 179-residue protein sequence, read N- to C-terminus: Repressor of phase 1 flagellin gene (179 aa).

Transcriptional repressor of the FliC phase-1 flagellin. This chain is Repressor of phase 1 flagellin gene (fljA), found in Salmonella abortus-equi.